The chain runs to 547 residues: Glucose-6-phosphate isomerase (547 aa).

The Proton donor role is filled by Glu-355. Active-site residues include His-386 and Lys-512.

The protein belongs to the GPI family.

Its subcellular location is the cytoplasm. The enzyme catalyses alpha-D-glucose 6-phosphate = beta-D-fructose 6-phosphate. Its pathway is carbohydrate biosynthesis; gluconeogenesis. The protein operates within carbohydrate degradation; glycolysis; D-glyceraldehyde 3-phosphate and glycerone phosphate from D-glucose: step 2/4. Its function is as follows. Catalyzes the reversible isomerization of glucose-6-phosphate to fructose-6-phosphate. The protein is Glucose-6-phosphate isomerase of Corynebacterium diphtheriae (strain ATCC 700971 / NCTC 13129 / Biotype gravis).